A 210-amino-acid chain; its full sequence is Chaperone protein TorD (210 aa).

It belongs to the TorD/DmsD family. TorD subfamily.

The protein localises to the cytoplasm. In terms of biological role, involved in the biogenesis of TorA. Acts on TorA before the insertion of the molybdenum cofactor and, as a result, probably favors a conformation of the apoenzyme that is competent for acquiring the cofactor. This Salmonella agona (strain SL483) protein is Chaperone protein TorD.